The sequence spans 140 residues: MIDFDNQTDTNLDITLLESIATFLSPREVELILLDDEAMRKINQEHRGIDKSTDVLSFPLEGGDFLPLGSILLSIDRVRAEAELRGHSIEAEAALLFIHGMLHLLGYDHEYDQGEQRFKEEELITRFGLPSSLIVRTEEL.

Residues H99, H103, and H109 each contribute to the Zn(2+) site.

The protein belongs to the endoribonuclease YbeY family. Requires Zn(2+) as cofactor.

It is found in the cytoplasm. Its function is as follows. Single strand-specific metallo-endoribonuclease involved in late-stage 70S ribosome quality control and in maturation of the 3' terminus of the 16S rRNA. In Wolinella succinogenes (strain ATCC 29543 / DSM 1740 / CCUG 13145 / JCM 31913 / LMG 7466 / NCTC 11488 / FDC 602W) (Vibrio succinogenes), this protein is Endoribonuclease YbeY.